The sequence spans 729 residues: Elongation factor 2 (729 aa).

One can recognise a tr-type G domain in the interval 19–262; that stretch reads EQIRNIAIAA…MVCEHFPNPI (244 aa). GTP is bound by residues 28-35, 94-98, and 148-151; these read AHVDHGKT, DTPGH, and NKVD. His-597 bears the Diphthamide mark.

This sequence belongs to the TRAFAC class translation factor GTPase superfamily. Classic translation factor GTPase family. EF-G/EF-2 subfamily.

It is found in the cytoplasm. Its function is as follows. Catalyzes the GTP-dependent ribosomal translocation step during translation elongation. During this step, the ribosome changes from the pre-translocational (PRE) to the post-translocational (POST) state as the newly formed A-site-bound peptidyl-tRNA and P-site-bound deacylated tRNA move to the P and E sites, respectively. Catalyzes the coordinated movement of the two tRNA molecules, the mRNA and conformational changes in the ribosome. The polypeptide is Elongation factor 2 (Halomicrobium mukohataei (strain ATCC 700874 / DSM 12286 / JCM 9738 / NCIMB 13541) (Haloarcula mukohataei)).